We begin with the raw amino-acid sequence, 147 residues long: Large ribosomal subunit protein uL15 (147 aa).

Over residues 1 to 10 (MYLNTLSPNS) the composition is skewed to polar residues. The interval 1–48 (MYLNTLSPNSKSHKKSKRVGRGIGSGFGKTSGRGHKGQKSRSGCKIRR) is disordered. Residues 11-20 (KSHKKSKRVG) are compositionally biased toward basic residues. Residues 21–31 (RGIGSGFGKTS) are compositionally biased toward gly residues. Residues 32-47 (GRGHKGQKSRSGCKIR) are compositionally biased toward basic residues.

This sequence belongs to the universal ribosomal protein uL15 family. Part of the 50S ribosomal subunit.

Its function is as follows. Binds to the 23S rRNA. The polypeptide is Large ribosomal subunit protein uL15 (Buchnera aphidicola subsp. Baizongia pistaciae (strain Bp)).